Consider the following 301-residue polypeptide: Probable alpha-L-glutamate ligase (301 aa).

Residues 104–287 enclose the ATP-grasp domain; it reads LQLLSRKGIG…VADMIFEFIE (184 aa). ATP contacts are provided by residues K141, 178–179, D187, and 211–213; these read EF and RSN. Residues D248, E260, and N262 each coordinate Mg(2+). Mn(2+)-binding residues include D248, E260, and N262.

It belongs to the RimK family. Requires Mg(2+) as cofactor. The cofactor is Mn(2+).

The sequence is that of Probable alpha-L-glutamate ligase from Vibrio atlanticus (strain LGP32) (Vibrio splendidus (strain Mel32)).